The following is a 136-amino-acid chain: Protein NrdI (136 aa).

This sequence belongs to the NrdI family.

Functionally, probably involved in ribonucleotide reductase function. The protein is Protein NrdI of Salmonella agona (strain SL483).